The primary structure comprises 297 residues: Ribosomal RNA small subunit methyltransferase H (297 aa).

S-adenosyl-L-methionine is bound by residues 34–36, aspartate 54, phenylalanine 88, aspartate 106, and glutamine 113; that span reads AGH. The disordered stretch occupies residues 272 to 297; the sequence is PLTAGEEETDRNPRARSAKLRAAEKK.

Belongs to the methyltransferase superfamily. RsmH family.

It localises to the cytoplasm. It carries out the reaction cytidine(1402) in 16S rRNA + S-adenosyl-L-methionine = N(4)-methylcytidine(1402) in 16S rRNA + S-adenosyl-L-homocysteine + H(+). Its function is as follows. Specifically methylates the N4 position of cytidine in position 1402 (C1402) of 16S rRNA. The sequence is that of Ribosomal RNA small subunit methyltransferase H from Acidobacterium capsulatum (strain ATCC 51196 / DSM 11244 / BCRC 80197 / JCM 7670 / NBRC 15755 / NCIMB 13165 / 161).